The sequence spans 148 residues: Sec-independent protein translocase protein TatB (148 aa).

A helical transmembrane segment spans residues 1–21 (MFGISFSELLLVGLVALLVLG). The tract at residues 85–148 (EPTPVEHVGE…NDTTQPPRAP (64 aa)) is disordered. Residues 107-148 (APAVAPTESAPVVAPASVEHVAQTAAPTTPAPNDTTQPPRAP) show a composition bias toward low complexity.

This sequence belongs to the TatB family. As to quaternary structure, the Tat system comprises two distinct complexes: a TatABC complex, containing multiple copies of TatA, TatB and TatC subunits, and a separate TatA complex, containing only TatA subunits. Substrates initially bind to the TatABC complex, which probably triggers association of the separate TatA complex to form the active translocon.

It localises to the cell inner membrane. Part of the twin-arginine translocation (Tat) system that transports large folded proteins containing a characteristic twin-arginine motif in their signal peptide across membranes. Together with TatC, TatB is part of a receptor directly interacting with Tat signal peptides. TatB may form an oligomeric binding site that transiently accommodates folded Tat precursor proteins before their translocation. This Pseudomonas fluorescens (strain Pf0-1) protein is Sec-independent protein translocase protein TatB.